We begin with the raw amino-acid sequence, 105 residues long: Pyrimidine/purine nucleoside phosphorylase (105 aa).

Belongs to the nucleoside phosphorylase PpnP family.

It catalyses the reaction a purine D-ribonucleoside + phosphate = a purine nucleobase + alpha-D-ribose 1-phosphate. It carries out the reaction adenosine + phosphate = alpha-D-ribose 1-phosphate + adenine. The catalysed reaction is cytidine + phosphate = cytosine + alpha-D-ribose 1-phosphate. The enzyme catalyses guanosine + phosphate = alpha-D-ribose 1-phosphate + guanine. It catalyses the reaction inosine + phosphate = alpha-D-ribose 1-phosphate + hypoxanthine. It carries out the reaction thymidine + phosphate = 2-deoxy-alpha-D-ribose 1-phosphate + thymine. The catalysed reaction is uridine + phosphate = alpha-D-ribose 1-phosphate + uracil. The enzyme catalyses xanthosine + phosphate = alpha-D-ribose 1-phosphate + xanthine. Catalyzes the phosphorolysis of diverse nucleosides, yielding D-ribose 1-phosphate and the respective free bases. Can use uridine, adenosine, guanosine, cytidine, thymidine, inosine and xanthosine as substrates. Also catalyzes the reverse reactions. In Cupriavidus necator (strain ATCC 17699 / DSM 428 / KCTC 22496 / NCIMB 10442 / H16 / Stanier 337) (Ralstonia eutropha), this protein is Pyrimidine/purine nucleoside phosphorylase.